We begin with the raw amino-acid sequence, 404 residues long: 5-aminolevulinate synthase (404 aa).

Substrate is bound by residues R21 and S136. Positions 188, 216, and 244 each coordinate pyridoxal 5'-phosphate. The active site involves K247. Residue K247 is modified to N6-(pyridoxal phosphate)lysine. Pyridoxal 5'-phosphate-binding residues include T276 and T277. A substrate-binding site is contributed by T362.

It belongs to the class-II pyridoxal-phosphate-dependent aminotransferase family. As to quaternary structure, homodimer. Pyridoxal 5'-phosphate serves as cofactor.

It catalyses the reaction succinyl-CoA + glycine + H(+) = 5-aminolevulinate + CO2 + CoA. The protein operates within porphyrin-containing compound metabolism; protoporphyrin-IX biosynthesis; 5-aminolevulinate from glycine: step 1/1. This chain is 5-aminolevulinate synthase (hemA), found in Rhizobium meliloti (strain 1021) (Ensifer meliloti).